The chain runs to 176 residues: Disulfide bond formation protein B (176 aa).

The Cytoplasmic segment spans residues 1 to 11 (MLQLTTYRNLQ). A helical membrane pass occupies residues 12 to 28 (VFLVIMTAIGMSFALFF). The Periplasmic segment spans residues 29 to 46 (LQRYMGFSPCPLCIFQRI). Cysteines 38 and 41 form a disulfide. The chain crosses the membrane as a helical span at residues 47 to 63 (GLMIMGGFALIAALFHP). Topologically, residues 64–70 (KSMVIRL) are cytoplasmic. Residues 71–88 (LLWLGSLAGIGWAAIVAG) form a helical membrane-spanning segment. Topologically, residues 89-145 (RHVWLQHLPADQVPSCGPGLDYWLDTLPMQQVLKEVFAGSGECASIEWTFLGLSIPE) are periplasmic. Cysteines 104 and 131 form a disulfide. A helical membrane pass occupies residues 146 to 164 (QSLILFSILILTHLLILWR). Residues 165–176 (IVRPSTPKPLAR) are Cytoplasmic-facing.

Belongs to the DsbB family.

It is found in the cell inner membrane. In terms of biological role, required for disulfide bond formation in some periplasmic proteins. Acts by oxidizing the DsbA protein. This chain is Disulfide bond formation protein B, found in Psychrobacter arcticus (strain DSM 17307 / VKM B-2377 / 273-4).